We begin with the raw amino-acid sequence, 197 residues long: uncharacterized protein (197 aa).

A helical membrane pass occupies residues Leu-103–Leu-123.

The protein localises to the host membrane. This is an uncharacterized protein from Equus caballus (Horse).